The chain runs to 603 residues: Elongation factor 4 (603 aa).

The tr-type G domain occupies 2-184 (NHIRNFSIIA…AVVARMPPPR (183 aa)). Residues 14 to 19 (DHGKST) and 131 to 134 (NKMD) each bind GTP.

Belongs to the TRAFAC class translation factor GTPase superfamily. Classic translation factor GTPase family. LepA subfamily.

It is found in the cell inner membrane. It carries out the reaction GTP + H2O = GDP + phosphate + H(+). Required for accurate and efficient protein synthesis under certain stress conditions. May act as a fidelity factor of the translation reaction, by catalyzing a one-codon backward translocation of tRNAs on improperly translocated ribosomes. Back-translocation proceeds from a post-translocation (POST) complex to a pre-translocation (PRE) complex, thus giving elongation factor G a second chance to translocate the tRNAs correctly. Binds to ribosomes in a GTP-dependent manner. In Albidiferax ferrireducens (strain ATCC BAA-621 / DSM 15236 / T118) (Rhodoferax ferrireducens), this protein is Elongation factor 4.